The chain runs to 399 residues: L-asparaginase-like protein GG20738 (399 aa).

Positions 1-22 (MLAQSCCLRLLILLLLCKSTCS) are cleaved as a signal peptide. 3 disulfide bridges follow: C90/C95, C189/C205, and C344/C371.

This sequence belongs to the Ntn-hydrolase family.

The protein is L-asparaginase-like protein GG20738 of Drosophila erecta (Fruit fly).